Reading from the N-terminus, the 896-residue chain is Alanine--tRNA ligase (896 aa).

Positions 599, 603, 707, and 711 each coordinate Zn(2+).

This sequence belongs to the class-II aminoacyl-tRNA synthetase family. The cofactor is Zn(2+).

It is found in the cytoplasm. It carries out the reaction tRNA(Ala) + L-alanine + ATP = L-alanyl-tRNA(Ala) + AMP + diphosphate. Functionally, catalyzes the attachment of alanine to tRNA(Ala) in a two-step reaction: alanine is first activated by ATP to form Ala-AMP and then transferred to the acceptor end of tRNA(Ala). Also edits incorrectly charged Ser-tRNA(Ala) and Gly-tRNA(Ala) via its editing domain. In Pyrobaculum calidifontis (strain DSM 21063 / JCM 11548 / VA1), this protein is Alanine--tRNA ligase.